The chain runs to 481 residues: Argininosuccinate synthase (481 aa).

Residues 17 to 25 (AFSGGLDTS) and Ala43 each bind ATP. Tyr99 contacts L-citrulline. The ATP site is built by Gly129 and Thr131. Positions 131, 135, and 136 each coordinate L-aspartate. Asn135 lines the L-citrulline pocket. Asp136 is an ATP binding site. L-citrulline-binding residues include Arg139 and Ser192. Asp194 lines the ATP pocket. The L-citrulline site is built by Thr201, Glu203, and Glu280.

The protein belongs to the argininosuccinate synthase family. Type 2 subfamily. In terms of assembly, homotetramer.

It is found in the cytoplasm. It catalyses the reaction L-citrulline + L-aspartate + ATP = 2-(N(omega)-L-arginino)succinate + AMP + diphosphate + H(+). The protein operates within amino-acid biosynthesis; L-arginine biosynthesis; L-arginine from L-ornithine and carbamoyl phosphate: step 2/3. This is Argininosuccinate synthase (argG) from Streptomyces coelicolor (strain ATCC BAA-471 / A3(2) / M145).